We begin with the raw amino-acid sequence, 1026 residues long: RecBCD enzyme subunit RecB (1026 aa).

The UvrD-like helicase ATP-binding domain occupies 1-438; the sequence is MSSFDIFSPT…LILDTNYRST (438 aa). Positions 1-766 are DNA-binding and helicase activity, interacts with RecC; that stretch reads MSSFDIFSPT…LANYANITQH (766 aa). Position 21 to 28 (21 to 28) interacts with ATP; it reads ASAGTGKT. In terms of domain architecture, UvrD-like helicase C-terminal spans 452 to 700; sequence PSPFLETPQT…KITTVHSSKG (249 aa). Residues 815–1026 form a nuclease activity, interacts with RecD and RecA region; sequence SQPIYSFSST…KGNGFLQPSP (212 aa). 3 residues coordinate Mg(2+): His854, Asp940, and Asp953. Asp953 serves as the catalytic For nuclease activity.

It belongs to the helicase family. UvrD subfamily. As to quaternary structure, heterotrimer of RecB, RecC and RecD. All subunits contribute to DNA-binding. Interacts with RecA. The cofactor is Mg(2+).

The enzyme catalyses Exonucleolytic cleavage (in the presence of ATP) in either 5'- to 3'- or 3'- to 5'-direction to yield 5'-phosphooligonucleotides.. The catalysed reaction is Couples ATP hydrolysis with the unwinding of duplex DNA by translocating in the 3'-5' direction.. It carries out the reaction ATP + H2O = ADP + phosphate + H(+). In terms of biological role, a helicase/nuclease that prepares dsDNA breaks (DSB) for recombinational DNA repair. Binds to DSBs and unwinds DNA via a highly rapid and processive ATP-dependent bidirectional helicase activity. Unwinds dsDNA until it encounters a Chi (crossover hotspot instigator) sequence from the 3' direction. Cuts ssDNA a few nucleotides 3' to the Chi site. The properties and activities of the enzyme are changed at Chi. The Chi-altered holoenzyme produces a long 3'-ssDNA overhang and facilitates RecA-binding to the ssDNA for homologous DNA recombination and repair. Holoenzyme degrades any linearized DNA that is unable to undergo homologous recombination. In the holoenzyme this subunit contributes ATPase, 3'-5' helicase, exonuclease activity and loads RecA onto ssDNA. This Chlamydia muridarum (strain MoPn / Nigg) protein is RecBCD enzyme subunit RecB.